The sequence spans 313 residues: Fructose-1,6-bisphosphatase class 1 (313 aa).

4 residues coordinate Mg(2+): glutamate 91, aspartate 112, leucine 114, and aspartate 115. Residues 115 to 118 (DGSS), tyrosine 223, and lysine 254 contribute to the substrate site. Glutamate 260 provides a ligand contact to Mg(2+).

This sequence belongs to the FBPase class 1 family. In terms of assembly, homotetramer. It depends on Mg(2+) as a cofactor.

It localises to the cytoplasm. It carries out the reaction beta-D-fructose 1,6-bisphosphate + H2O = beta-D-fructose 6-phosphate + phosphate. It participates in carbohydrate biosynthesis; gluconeogenesis. This chain is Fructose-1,6-bisphosphatase class 1, found in Geobacter sulfurreducens (strain ATCC 51573 / DSM 12127 / PCA).